Reading from the N-terminus, the 114-residue chain is SNF1-related protein kinase regulatory subunit beta-3 (114 aa).

The segment at 26 to 50 (SYNNVYSSTEDETRDPPAVPPHLQH) is disordered. Residues 40 to 114 (DPPAVPPHLQ…PVQRRGSANV (75 aa)) form an association with SNF1 complex (ASC) region.

It belongs to the 5'-AMP-activated protein kinase beta subunit family. Subunit of a probable heterotrimeric complex consisting of an alpha catalytic (KIN10 or KIN11) subunit, and a beta (KINB) and a gamma (KING or SNF4) non-catalytic regulatory subunits. Interacts with KIN10, KIN11 and SNF4. Interacts with FLZ1, FLZ2, FLZ3, FLZ4, FLZ5, FLZ7, FLZ8, FLZ10, FLZ13, FLZ14, FLZ15 and FLZ16. In terms of tissue distribution, expressed in rosette (at the protein level). Expressed in the whole plant and at the different developmental stage with a higher level in stems.

Functionally, regulatory subunit of the probable trimeric SNF1-related protein kinase (SnRK) complex, which may play a role in a signal transduction cascade regulating gene expression and carbohydrate metabolism in higher plants. This is SNF1-related protein kinase regulatory subunit beta-3 (KINB3) from Arabidopsis thaliana (Mouse-ear cress).